The sequence spans 469 residues: ATP synthase subunit beta (469 aa).

155–162 (GGAGVGKT) lines the ATP pocket.

Belongs to the ATPase alpha/beta chains family. F-type ATPases have 2 components, CF(1) - the catalytic core - and CF(0) - the membrane proton channel. CF(1) has five subunits: alpha(3), beta(3), gamma(1), delta(1), epsilon(1). CF(0) has three main subunits: a(1), b(2) and c(9-12). The alpha and beta chains form an alternating ring which encloses part of the gamma chain. CF(1) is attached to CF(0) by a central stalk formed by the gamma and epsilon chains, while a peripheral stalk is formed by the delta and b chains.

The protein resides in the cell inner membrane. It catalyses the reaction ATP + H2O + 4 H(+)(in) = ADP + phosphate + 5 H(+)(out). Functionally, produces ATP from ADP in the presence of a proton gradient across the membrane. The catalytic sites are hosted primarily by the beta subunits. The sequence is that of ATP synthase subunit beta from Thermosipho melanesiensis (strain DSM 12029 / CIP 104789 / BI429).